The following is a 199-amino-acid chain: NAD(P)H dehydrogenase (quinone) (199 aa).

The region spanning 4–190 (VLVLYYSAYG…GGARYQGKVI (187 aa)) is the Flavodoxin-like domain. FMN-binding positions include 10 to 15 (SAYGHI) and 78 to 80 (TRF). Tyrosine 12 serves as a coordination point for NAD(+). Position 98 (tryptophan 98) interacts with substrate. FMN contacts are provided by residues 113-119 (STASQHG) and histidine 134.

Belongs to the WrbA family. It depends on FMN as a cofactor.

It carries out the reaction a quinone + NADH + H(+) = a quinol + NAD(+). The enzyme catalyses a quinone + NADPH + H(+) = a quinol + NADP(+). The chain is NAD(P)H dehydrogenase (quinone) from Rhodopseudomonas palustris (strain BisB18).